Consider the following 1037-residue polypeptide: Outer dynein arm-docking complex subunit 2 (1037 aa).

2 stretches are compositionally biased toward basic and acidic residues: residues 316-334 and 376-391; these read EEQQ…EDGH and SSIK…KLEK. Disordered stretches follow at residues 316-353 and 376-439; these read EEQQ…FGKS and SSIK…ANAD. ARM repeat units follow at residues 477 to 516, 518 to 557, 528 to 570, 615 to 654, 656 to 695, 739 to 778, 821 to 860, 864 to 903, 905 to 944, and 946 to 985; these read ETCQ…EISH, PQIR…NVAK, GGLP…QHGG, HSNK…ECAS, ENYR…QCAE, KENV…ECCQ, PESM…PCIE, DAGE…NIAK, QENL…RCCM, and GRNR…QLSE. Lys545 is subject to N6-methyllysine.

In terms of assembly, component of the outer dynein arm-docking complex along with ODAD1, ODAD3, and ODAD4. Interacts with CFAP61. Highly expressed in testis. In males, also detected at lower levels in lung, brain, liver and muscle. In females, detected in ovary.

It is found in the cytoplasm. The protein localises to the cytoskeleton. Its subcellular location is the cilium axoneme. The protein resides in the cilium basal body. Its function is as follows. Component of the outer dynein arm-docking complex (ODA-DC) that mediates outer dynein arms (ODA) binding onto the doublet microtubule. Involved in mediating assembly of both ODAs and their axonemal docking complex onto ciliary microtubules. This Mus musculus (Mouse) protein is Outer dynein arm-docking complex subunit 2.